The chain runs to 419 residues: N-acylglucosamine 2-epimerase (419 aa).

Positions 185 to 206 (LLNLVEQLGEEDEEMTDKYAEL) are leucine-zipper. Phosphoserine is present on S418.

It belongs to the N-acylglucosamine 2-epimerase family. As to quaternary structure, homodimer. Forms a heterodimer with renin and inhibits its activity. In terms of tissue distribution, kidney, adrenal gland, brain, lung, spleen, ovary, testis and heart.

It catalyses the reaction an N-acyl-D-glucosamine = an N-acyl-D-mannosamine. It participates in amino-sugar metabolism; N-acetylneuraminate degradation. In terms of biological role, catalyzes the interconversion of N-acetylglucosamine to N-acetylmannosamine. Involved in the N-glycolylneuraminic acid (Neu5Gc) degradation pathway. This Rattus norvegicus (Rat) protein is N-acylglucosamine 2-epimerase (Renbp).